The sequence spans 59 residues: UPF0391 membrane protein GbCGDNIH1_2123 (59 aa).

The next 2 helical transmembrane spans lie at 6–26 (LALFFLVVSLIAGLFGFTGIS) and 35–55 (ILFVIFLIVFVVLLVMALAAG).

This sequence belongs to the UPF0391 family.

It localises to the cell membrane. The chain is UPF0391 membrane protein GbCGDNIH1_2123 from Granulibacter bethesdensis (strain ATCC BAA-1260 / CGDNIH1).